Here is a 725-residue protein sequence, read N- to C-terminus: Ophiobolin F synthase (725 aa).

The segment at 1-322 is (7Z)-ophiobola-7,19-dien-3-ol synthase; the sequence is MEYKYSTIVD…RYHADAKFNE (322 aa). Mg(2+) is bound by residues Asp-93 and Asp-97. Asp-93 is a binding site for substrate. The DDXXD 1 motif lies at 93-97; the sequence is DDEID. Residues 182-185, Asn-226, 230-234, and 313-314 contribute to the substrate site; these read RCMD, SYEKE, and RY. Residues 226–234 carry the NSE/DTE motif; that stretch reads NDLFSYEKE. The tract at residues 323-725 is geranylfarnesyl diphosphate synthase; that stretch reads LQMLRAEHGV…LRMMLELLKV (403 aa). The segment at 362–388 is disordered; it reads GVNGVNGKRKRSGEETADDARTNGNGI. Positions 373–382 are enriched in basic and acidic residues; it reads SGEETADDAR. The isopentenyl diphosphate site is built by Lys-436, Arg-439, and His-468. Asp-475 and Asp-479 together coordinate Mg(2+). A DDXXD 2 motif is present at residues 475–479; it reads DDIED. Residue Arg-484 participates in dimethylallyl diphosphate binding. An isopentenyl diphosphate-binding site is contributed by Arg-485. Dimethylallyl diphosphate contacts are provided by Lys-562, Thr-563, Gln-601, Asn-608, Lys-618, and Lys-628.

It in the N-terminal section; belongs to the terpene synthase family. In the C-terminal section; belongs to the FPP/GGPP synthase family. Mg(2+) serves as cofactor.

The catalysed reaction is isopentenyl diphosphate + (2E,6E)-farnesyl diphosphate = (2E,6E,10E)-geranylgeranyl diphosphate + diphosphate. It carries out the reaction isopentenyl diphosphate + (2E,6E,10E)-geranylgeranyl diphosphate = (2E,6E,10E,14E)-geranylfarnesyl diphosphate + diphosphate. The enzyme catalyses (2E,6E,10E,14E)-geranylfarnesyl diphosphate + H2O = ophiobolin F + diphosphate. It functions in the pathway secondary metabolite biosynthesis; terpenoid biosynthesis. Functionally, bifunctional sesterterpene synthase that converts isopentenyl diphosphate (IPP) and dimethylallyl diphosphate (DMAPP) into ophiobolin F. The C-terminal prenyltransferase (PT) domain of AcldOS converts isopentenyl diphosphate and dimethylallyl diphosphate into geranylfarnesyl diphosphate (GFPP), whereas the N-terminal terpene cyclase (TC) domain catalyzes the cyclization of GFPP to ophiobolin F. The sequence is that of Ophiobolin F synthase from Aspergillus calidoustus.